The primary structure comprises 242 residues: Lactate utilization protein A 2 (242 aa).

Belongs to the LutA/YkgE family.

Its function is as follows. Is involved in L-lactate degradation and allows cells to grow with lactate as the sole carbon source. The chain is Lactate utilization protein A 2 from Bacillus cereus (strain AH820).